The chain runs to 136 residues: Probable S-adenosyl-L-methionine-binding protein PH1056 (136 aa).

One can recognise a TsaA-like domain in the interval 8–126; the sequence is IVPVGYIRKE…FPERYDCPKE (119 aa). S-adenosyl-L-methionine-binding positions include 48–49, Arg78, and 106–109; these read HK and EDGT.

The protein belongs to the tRNA methyltransferase O family.

In Pyrococcus horikoshii (strain ATCC 700860 / DSM 12428 / JCM 9974 / NBRC 100139 / OT-3), this protein is Probable S-adenosyl-L-methionine-binding protein PH1056.